A 1043-amino-acid polypeptide reads, in one-letter code: Constitutive coactivator of PPAR-gamma-like protein 1 homolog (1043 aa).

Disordered stretches follow at residues 353-497 (SMVP…HMQI) and 929-1043 (YGRG…NKEE). 2 stretches are compositionally biased toward polar residues: residues 362–375 (QMLN…QSRP) and 405–419 (SPIN…NHVD). 2 stretches are compositionally biased toward basic and acidic residues: residues 451 to 471 (TWDK…EQAK) and 951 to 964 (EVAK…EDSK). The interval 801–1043 (VELATKVEKM…LEGAVANKEE (243 aa)) is RNA binding. Residues 995 to 1010 (EARASSNSESALSSDS) are compositionally biased toward low complexity.

This sequence belongs to the constitutive coactivator of PPAR-gamma family.

The protein localises to the cytoplasm. It localises to the cell membrane. Functionally, may bee involved in the oxidative stress-induced survival signaling. Binds RNA. May participate in mRNA transport in the cytoplasm. The protein is Constitutive coactivator of PPAR-gamma-like protein 1 homolog (fam120a) of Xenopus tropicalis (Western clawed frog).